A 627-amino-acid chain; its full sequence is Alpha-terpineol synthase, chloroplastic (627 aa).

The N-terminal 53 residues, 1 to 53 (MAGITGVMNMKLAARPSSGRHSRGCRPAVVPSAGKQMLLVRRHPPGSASWPTR), are a transit peptide targeting the chloroplast. Residues 13-90 (AARPSSGRHS…EDRASRNTSS (78 aa)) form a disordered region. (2E)-geranyl diphosphate-binding residues include Arg339, Asp376, Asp380, Arg518, and Asp521. Positions 376 and 380 each coordinate Mg(2+). Positions 376–380 (DDTYD) match the DDXXD motif motif. The Mg(2+) site is built by Asp521, Ser525, and Glu529.

The protein belongs to the terpene synthase family. Tpsb subfamily. As to quaternary structure, monomer. Mg(2+) is required as a cofactor. It depends on Mn(2+) as a cofactor. As to expression, expressed in seedling leaf sheaths and roots.

The protein resides in the plastid. Its subcellular location is the chloroplast. It carries out the reaction (2E)-geranyl diphosphate + H2O = (S)-alpha-terpineol + diphosphate. The catalysed reaction is (2E)-geranyl diphosphate = (4S)-limonene + diphosphate. The enzyme catalyses (2E)-geranyl diphosphate = gamma-terpinene + diphosphate. It catalyses the reaction (2E)-geranyl diphosphate = beta-myrcene + diphosphate. It carries out the reaction (2E)-geranyl diphosphate = terpinolene + diphosphate. The catalysed reaction is (2E)-geranyl diphosphate + H2O = 4-terpineol + diphosphate. It functions in the pathway secondary metabolite biosynthesis; terpenoid biosynthesis. Component of the volatile terpenes biosynthesis pathways. Mediates the synthesis of a blend of monoterpenes. Converts mainly geranyl diphosphate to alpha-terpineol. Also triggers the biosynthesis of minor monoterpenes including limonene, gamma-terpinene, beta-myrcene, terpinolene and 4-terpineol. The polypeptide is Alpha-terpineol synthase, chloroplastic (Zea mays (Maize)).